The following is a 387-amino-acid chain: Chaperone protein DnaJ (387 aa).

The region spanning 5-70 is the J domain; the sequence is DYYEVLGLQK…DKKAKYDQFG (66 aa). A CR-type zinc finger spans residues 144–226; the sequence is GCEKEISITR…CKGKGTVRKN (83 aa). Zn(2+) is bound by residues Cys157, Cys160, Cys174, Cys177, Cys200, Cys203, Cys214, and Cys217. CXXCXGXG motif repeat units lie at residues 157 to 164, 174 to 181, 200 to 207, and 214 to 221; these read CETCHGTG, CPKCNGSG, CDQCGGTG, and CPDCKGKG.

It belongs to the DnaJ family. As to quaternary structure, homodimer. It depends on Zn(2+) as a cofactor.

It is found in the cytoplasm. Participates actively in the response to hyperosmotic and heat shock by preventing the aggregation of stress-denatured proteins and by disaggregating proteins, also in an autonomous, DnaK-independent fashion. Unfolded proteins bind initially to DnaJ; upon interaction with the DnaJ-bound protein, DnaK hydrolyzes its bound ATP, resulting in the formation of a stable complex. GrpE releases ADP from DnaK; ATP binding to DnaK triggers the release of the substrate protein, thus completing the reaction cycle. Several rounds of ATP-dependent interactions between DnaJ, DnaK and GrpE are required for fully efficient folding. Also involved, together with DnaK and GrpE, in the DNA replication of plasmids through activation of initiation proteins. The protein is Chaperone protein DnaJ of Clostridium perfringens (strain 13 / Type A).